We begin with the raw amino-acid sequence, 166 residues long: 2-amino-4-hydroxy-6-hydroxymethyldihydropteridine pyrophosphokinase (166 aa).

Belongs to the HPPK family.

It catalyses the reaction 6-hydroxymethyl-7,8-dihydropterin + ATP = (7,8-dihydropterin-6-yl)methyl diphosphate + AMP + H(+). The protein operates within cofactor biosynthesis; tetrahydrofolate biosynthesis; 2-amino-4-hydroxy-6-hydroxymethyl-7,8-dihydropteridine diphosphate from 7,8-dihydroneopterin triphosphate: step 4/4. Its function is as follows. Catalyzes the transfer of pyrophosphate from adenosine triphosphate (ATP) to 6-hydroxymethyl-7,8-dihydropterin, an enzymatic step in folate biosynthesis pathway. This is 2-amino-4-hydroxy-6-hydroxymethyldihydropteridine pyrophosphokinase (folK) from Streptococcus pyogenes serotype M1.